The chain runs to 235 residues: dITP/XTP pyrophosphatase (235 aa).

Residue 7–12 coordinates substrate; the sequence is STNPGK. The active-site Proton acceptor is aspartate 70. Aspartate 70 is a binding site for Mg(2+). Residues serine 71, 180–183, lysine 211, and 216–217 each bind substrate; these read FGYD and HR.

This sequence belongs to the HAM1 NTPase family. Homodimer. Mg(2+) is required as a cofactor.

The enzyme catalyses XTP + H2O = XMP + diphosphate + H(+). The catalysed reaction is dITP + H2O = dIMP + diphosphate + H(+). It carries out the reaction ITP + H2O = IMP + diphosphate + H(+). Its function is as follows. Pyrophosphatase that catalyzes the hydrolysis of nucleoside triphosphates to their monophosphate derivatives, with a high preference for the non-canonical purine nucleotides XTP (xanthosine triphosphate), dITP (deoxyinosine triphosphate) and ITP. Seems to function as a house-cleaning enzyme that removes non-canonical purine nucleotides from the nucleotide pool, thus preventing their incorporation into DNA/RNA and avoiding chromosomal lesions. The polypeptide is dITP/XTP pyrophosphatase (Anaeromyxobacter dehalogenans (strain 2CP-C)).